Here is a 159-residue protein sequence, read N- to C-terminus: Photosystem II extrinsic protein U, chloroplastic (159 aa).

The protein belongs to the PsbU family. PSII is composed of 1 copy each of membrane proteins PsbA, PsbB, PsbC, PsbD, PsbE, PsbF, PsbH, PsbI, PsbJ, PsbK, PsbL, PsbM, PsbT, PsbX, PsbY, PsbZ, Psb30/Ycf12, at least 3 peripheral proteins of the oxygen-evolving complex and a large number of cofactors. It forms dimeric complexes. Part of the oxygen-evolving complex of photosystem II.

Its subcellular location is the plastid. It localises to the chloroplast thylakoid membrane. One of the extrinsic, lumenal subunits of photosystem II (PSII). PSII is a light-driven water plastoquinone oxidoreductase, using light energy to abstract electrons from H(2)O, generating a proton gradient subsequently used for ATP formation. The extrinsic proteins stabilize the structure of photosystem II oxygen-evolving complex (OEC), the ion environment of oxygen evolution and protect the OEC against heat-induced inactivation. The polypeptide is Photosystem II extrinsic protein U, chloroplastic (Karenia brevis (Red tide dinoflagellate)).